A 577-amino-acid chain; its full sequence is Laccase-25 (577 aa).

The signal sequence occupies residues 1–22 (MTLHWSLLLFIAIALVSSVAQA). 2 consecutive Plastocyanin-like domains span residues 30-147 (NVGN…PRGG) and 158-313 (KEHV…YAGA). N-linked (GlcNAc...) asparagine glycosylation is present at asparagine 33. Histidine 81 and histidine 83 together coordinate Cu cation. The N-linked (GlcNAc...) asparagine glycan is linked to asparagine 109. Cu cation-binding residues include histidine 126 and histidine 128. N-linked (GlcNAc...) asparagine glycans are attached at residues asparagine 169, asparagine 203, asparagine 208, asparagine 218, asparagine 332, asparagine 383, asparagine 396, asparagine 404, asparagine 441, and asparagine 459. A Plastocyanin-like 3 domain is found at 423 to 560 (DFPDTPPVVF…AMVLEVLDGP (138 aa)). Residues histidine 477, histidine 480, histidine 482, histidine 539, cysteine 540, histidine 541, and histidine 545 each contribute to the Cu cation site.

It belongs to the multicopper oxidase family. The cofactor is Cu cation.

Its subcellular location is the secreted. The protein localises to the extracellular space. It is found in the apoplast. It catalyses the reaction 4 hydroquinone + O2 = 4 benzosemiquinone + 2 H2O. Functionally, lignin degradation and detoxification of lignin-derived products. In Oryza sativa subsp. japonica (Rice), this protein is Laccase-25 (LAC25).